The following is a 295-amino-acid chain: Ethanolamine ammonia-lyase small subunit (295 aa).

Adenosylcob(III)alamin contacts are provided by Val-208 and Glu-229.

Belongs to the EutC family. The basic unit is a heterodimer which dimerizes to form tetramers. The heterotetramers trimerize; 6 large subunits form a core ring with 6 small subunits projecting outwards. Adenosylcob(III)alamin serves as cofactor.

The protein resides in the bacterial microcompartment. It carries out the reaction ethanolamine = acetaldehyde + NH4(+). The protein operates within amine and polyamine degradation; ethanolamine degradation. In terms of biological role, catalyzes the deamination of various vicinal amino-alcohols to oxo compounds. Allows this organism to utilize ethanolamine as the sole source of nitrogen and carbon in the presence of external vitamin B12. This is Ethanolamine ammonia-lyase small subunit from Fusobacterium nucleatum subsp. nucleatum (strain ATCC 25586 / DSM 15643 / BCRC 10681 / CIP 101130 / JCM 8532 / KCTC 2640 / LMG 13131 / VPI 4355).